Consider the following 359-residue polypeptide: Epoxide hydrolase 4 (359 aa).

A helical; Signal-anchor for type II membrane protein membrane pass occupies residues 15-35 (ALLYWSLVYGYCGLCASVHLL). One can recognise an AB hydrolase-1 domain in the interval 92 to 337 (PLMLLLHGFP…ILSEGSHWLQ (246 aa)). Residue D167 is the Nucleophile of the active site. Y279 (proton donor) is an active-site residue. The active-site Proton acceptor is H334.

The protein belongs to the AB hydrolase superfamily. Epoxide hydrolase family.

The protein resides in the membrane. The protein is Epoxide hydrolase 4 (Ephx4) of Mus musculus (Mouse).